Consider the following 271-residue polypeptide: MISIQNLTFYYGCNPILKDINLTIQNNSWVSIVGHNGSGKSTLAKILLGLLAFNKGQIVIDNIVLNEKNLPILRPKIGIVFQNPDYQFTGLTVREDIAFGLENYNVCREEIIAKVLKYAKMVKIDDLLDKNVNQLSGGQKQRVTIASILAMEPEIIIFDEATSFLDPQGALEVQKIIQTIKNKILITITHDLDFASKSDEIIVLYQGKLITQRPPKNLLQDPLFLQQYKLTPPLSLQLYYEILKDSTTKKIKNNQMLENLKDILWQYNLKK.

Residues 2-231 enclose the ABC transporter domain; the sequence is ISIQNLTFYY…PLFLQQYKLT (230 aa). An ATP-binding site is contributed by 34-41; sequence GHNGSGKS.

Belongs to the ABC transporter superfamily. Energy-coupling factor EcfA family. As to quaternary structure, forms a stable energy-coupling factor (ECF) transporter complex composed of 2 membrane-embedded substrate-binding proteins (S component), 2 ATP-binding proteins (A component) and 2 transmembrane proteins (T component).

It is found in the cell membrane. ATP-binding (A) component of a common energy-coupling factor (ECF) ABC-transporter complex. Unlike classic ABC transporters this ECF transporter provides the energy necessary to transport a number of different substrates. This chain is Energy-coupling factor transporter ATP-binding protein EcfA, found in Aster yellows witches'-broom phytoplasma (strain AYWB).